Here is a 624-residue protein sequence, read N- to C-terminus: Bifunctional protein ArgH (624 aa).

The tract at residues Met-1 to Val-466 is argininosuccinate lyase. The region spanning Val-464–Ser-614 is the N-acetyltransferase domain. A probable acetyltransferase region spans residues Arg-467–Ala-624.

The protein in the N-terminal section; belongs to the lyase 1 family. Argininosuccinate lyase subfamily.

The protein localises to the cytoplasm. The catalysed reaction is 2-(N(omega)-L-arginino)succinate = fumarate + L-arginine. It functions in the pathway amino-acid biosynthesis; L-arginine biosynthesis; L-arginine from L-ornithine and carbamoyl phosphate: step 3/3. This chain is Bifunctional protein ArgH (argH), found in Vibrio vulnificus (strain CMCP6).